The following is a 223-amino-acid chain: Ras-related protein Rab-21 (223 aa).

Ala-2 bears the N-acetylalanine mark. The GTP site is built by Gly-26, Gly-29, Lys-30, Thr-31, Ser-32, Asn-43, Asp-44, His-46, Thr-48, and Thr-49. Mg(2+) is bound at residue Thr-31. Positions 41 to 54 (KFNDKHITTLQASF) match the Switch 1 motif. Mg(2+) contacts are provided by Thr-49 and Asp-72. A Switch 2 motif is present at residues 74-92 (AGQERFHALGPIYYRDSNG). Residues Gly-75, Asn-130, Lys-131, Asp-133, Ala-161, and Lys-162 each coordinate GTP. 2 S-geranylgeranyl cysteine lipidation sites follow: Cys-219 and Cys-220. Position 220 is a cysteine methyl ester (Cys-220). Residues 221-223 (SSG) constitute a propeptide, removed in mature form.

Belongs to the small GTPase superfamily. Rab family. As to quaternary structure, interacts with the cytoplasmic tail of integrins ITGA1, ITGA2, ITGA5, ITGA6, ITGA11 and ITGB1; this interaction is dependent upon its GDP/GTP cycle. Interacts with ANKRD27. Interacts (active GTP-bound form) with TMED10; the interaction is indirect and regulates TMED10 abundance and localization at the Golgi. The cofactor is Mg(2+).

Its subcellular location is the endoplasmic reticulum membrane. It localises to the golgi apparatus. It is found in the trans-Golgi network. The protein localises to the golgi apparatus membrane. The protein resides in the early endosome membrane. Its subcellular location is the cytoplasmic vesicle membrane. It localises to the cleavage furrow. It is found in the cell projection. The protein localises to the neuron projection. The enzyme catalyses GTP + H2O = GDP + phosphate + H(+). Regulated by guanine nucleotide exchange factors (GEFs) including ANKRD27 and RABGEF1, which promote the exchange of bound GDP for free GTP. Regulated by GTPase activating proteins (GAPs) which increase the GTP hydrolysis activity. Inhibited by GDP dissociation inhibitors (GDIs). In terms of biological role, the small GTPases Rab are key regulators of intracellular membrane trafficking, from the formation of transport vesicles to their fusion with membranes. Rabs cycle between an inactive GDP-bound form and an active GTP-bound form that is able to recruit to membranes different sets of downstream effectors directly responsible for vesicle formation, movement, tethering and fusion. RAB21 is involved in membrane trafficking control. Regulates integrin internalization and recycling, but does not influence the traffic of endosomally translocated receptors in general. As a result, may regulate cell adhesion and migration. During the mitosis of adherent cells, controls the endosomal trafficking of integrins which is required for the successful completion of cytokinesis. Involved in neurite growth. Modulates protein levels of the cargo receptors TMED2 and TMED10, and required for appropriate Golgi localization of TMED10. This chain is Ras-related protein Rab-21 (RAB21), found in Canis lupus familiaris (Dog).